We begin with the raw amino-acid sequence, 374 residues long: tRNA-specific 2-thiouridylase MnmA (374 aa).

ATP-binding positions include Gly-13–Ser-20 and Met-39. The tract at residues Asn-99 to Asp-101 is interaction with target base in tRNA. The Nucleophile role is filled by Cys-104. Cys-104 and Cys-201 form a disulfide bridge. Residue Gly-128 coordinates ATP. Residues Lys-151–Gln-153 are interaction with tRNA. The active-site Cysteine persulfide intermediate is the Cys-201. The interval Arg-313–Tyr-314 is interaction with tRNA.

Belongs to the MnmA/TRMU family.

The protein localises to the cytoplasm. It carries out the reaction S-sulfanyl-L-cysteinyl-[protein] + uridine(34) in tRNA + AH2 + ATP = 2-thiouridine(34) in tRNA + L-cysteinyl-[protein] + A + AMP + diphosphate + H(+). Catalyzes the 2-thiolation of uridine at the wobble position (U34) of tRNA, leading to the formation of s(2)U34. The protein is tRNA-specific 2-thiouridylase MnmA of Streptococcus equi subsp. zooepidemicus (strain MGCS10565).